Consider the following 393-residue polypeptide: Glutamate 5-kinase (393 aa).

Lys-17 is a binding site for ATP. Substrate is bound by residues Ser-57, Asp-144, and Asn-156. 176–177 (SD) is a binding site for ATP. One can recognise a PUA domain in the interval 282-359 (AGSIAIDAGA…AEIAAILGYA (78 aa)). The tract at residues 374 to 393 (APSGARSEEGGNEKKGKLHA) is disordered. Over residues 379–393 (RSEEGGNEKKGKLHA) the composition is skewed to basic and acidic residues.

This sequence belongs to the glutamate 5-kinase family.

It localises to the cytoplasm. The catalysed reaction is L-glutamate + ATP = L-glutamyl 5-phosphate + ADP. Its pathway is amino-acid biosynthesis; L-proline biosynthesis; L-glutamate 5-semialdehyde from L-glutamate: step 1/2. In terms of biological role, catalyzes the transfer of a phosphate group to glutamate to form L-glutamate 5-phosphate. This chain is Glutamate 5-kinase, found in Sinorhizobium fredii (strain NBRC 101917 / NGR234).